Reading from the N-terminus, the 144-residue chain is Mannitol-specific phosphotransferase enzyme IIA component (144 aa).

In terms of domain architecture, PTS EIIA type-2 spans 3-142 (ELFSNDNIFL…EEIKQVFEEA (140 aa)). His63 (tele-phosphohistidine intermediate) is an active-site residue. Position 63 is a phosphohistidine; by HPr (His63).

Homodimer or homotrimer. Seems to be a monomer when not phosphorylated.

The protein resides in the cytoplasm. Functionally, the phosphoenolpyruvate-dependent sugar phosphotransferase system (sugar PTS), a major carbohydrate active transport system, catalyzes the phosphorylation of incoming sugar substrates concomitantly with their translocation across the cell membrane. The enzyme II CmtAB PTS system is involved in D-mannitol transport. This is Mannitol-specific phosphotransferase enzyme IIA component (mtlF) from Staphylococcus aureus (strain MRSA252).